A 1092-amino-acid chain; its full sequence is Rho GTPase-activating protein 7 (1092 aa).

Residues L11 to E78 enclose the SAM domain. S86, S89, and S129 each carry phosphoserine. Disordered stretches follow at residues P121–T179, R297–L330, G409–S434, and S492–G553. The segment covering P130–S143 has biased composition (polar residues). 2 stretches are compositionally biased toward low complexity: residues V154–S174 and V299–T325. The segment at Q275 to G448 is focal adhesion-targeting (FAT). S322 carries the post-translational modification Phosphoserine. Over residues L415–E426 the composition is skewed to basic and acidic residues. A compositionally biased stretch (polar residues) spans A500–K512. Over residues I514–S526 the composition is skewed to basic and acidic residues. Over residues D527–N536 the composition is skewed to polar residues. Residues K615–R637 are polybasic cluster (PBR). One can recognise a Rho-GAP domain in the interval V642–F848. An START domain is found at N878–E1085.

Interacts with EF1A1, facilitates EF1A1 distribution to the membrane periphery and ruffles upon growth factor stimulation and suppresses cell migration. Interacts with tensin TNS1 (via N-terminus); the interaction is decreased by phosphorylation of TNS1. Interacts with TNS3 and PTEN; in resting cells, interacts with TNS3 (via C2 tensin-type domain) but, following growth factor stimulation, TNS3 and PTEN are phosphorylated which leads to weakened interaction with TNS3 and enhanced interaction with PTEN. Interacts (via C-terminus) with tensin TNS4 (via SH2 domain); the interaction is independent of tyrosine phosphorylation of DLC1. As to expression, widely expressed with the highest levels in heart, liver and lung.

It is found in the cytoplasm. The protein localises to the cell junction. Its subcellular location is the focal adhesion. The protein resides in the membrane. Its function is as follows. Functions as a GTPase-activating protein for the small GTPases RHOA, RHOB, RHOC and CDC42, terminating their downstream signaling. This induces morphological changes and detachment through cytoskeletal reorganization, playing a critical role in biological processes such as cell migration and proliferation. Also functions in vivo as an activator of the phospholipase PLCD1. Active DLC1 increases cell migration velocity but reduces directionality. Required for growth factor-induced epithelial cell migration; in resting cells, interacts with TNS3 while PTEN interacts with the p85 regulatory subunit of the PI3K kinase complex but growth factor stimulation induces phosphorylation of TNS3 and PTEN, causing them to change their binding preference so that PTEN interacts with DLC1 and TNS3 interacts with p85. The PTEN-DLC1 complex translocates to the posterior of migrating cells to activate RHOA while the TNS3-p85 complex translocates to the leading edge of migrating cells to promote RAC1 activation. The polypeptide is Rho GTPase-activating protein 7 (Dlc1) (Mus musculus (Mouse)).